Consider the following 416-residue polypeptide: S-adenosylmethionine synthase (416 aa).

Position 16 (histidine 16) interacts with ATP. Residue aspartate 18 coordinates Mg(2+). Glutamate 44 contributes to the K(+) binding site. L-methionine-binding residues include glutamate 57 and glutamine 100. Residues 100 to 110 (QSPDISQGVTA) form a flexible loop region. ATP-binding positions include 175-177 (DGK), 251-252 (KF), aspartate 260, 266-267 (RK), alanine 283, and lysine 287. Residue aspartate 260 coordinates L-methionine. L-methionine is bound at residue lysine 291.

It belongs to the AdoMet synthase family. As to quaternary structure, homotetramer; dimer of dimers. The cofactor is Mg(2+). K(+) is required as a cofactor.

It localises to the cytoplasm. The catalysed reaction is L-methionine + ATP + H2O = S-adenosyl-L-methionine + phosphate + diphosphate. It functions in the pathway amino-acid biosynthesis; S-adenosyl-L-methionine biosynthesis; S-adenosyl-L-methionine from L-methionine: step 1/1. In terms of biological role, catalyzes the formation of S-adenosylmethionine (AdoMet) from methionine and ATP. The overall synthetic reaction is composed of two sequential steps, AdoMet formation and the subsequent tripolyphosphate hydrolysis which occurs prior to release of AdoMet from the enzyme. This chain is S-adenosylmethionine synthase, found in Microcystis aeruginosa (strain NIES-843 / IAM M-2473).